A 330-amino-acid polypeptide reads, in one-letter code: GMP reductase (330 aa).

Cysteine 180 (thioimidate intermediate) is an active-site residue. 209–232 (LIADGGIRHNGDIAKSVRFGASMV) provides a ligand contact to NADP(+).

This sequence belongs to the IMPDH/GMPR family. GuaC type 2 subfamily.

The catalysed reaction is IMP + NH4(+) + NADP(+) = GMP + NADPH + 2 H(+). Functionally, catalyzes the irreversible NADPH-dependent deamination of GMP to IMP. It functions in the conversion of nucleobase, nucleoside and nucleotide derivatives of G to A nucleotides, and in maintaining the intracellular balance of A and G nucleotides. The polypeptide is GMP reductase (Lactobacillus delbrueckii subsp. bulgaricus (strain ATCC BAA-365 / Lb-18)).